The chain runs to 368 residues: DNA replication and repair protein RecF (368 aa).

30 to 37 (GDNGAGKT) contributes to the ATP binding site.

It belongs to the RecF family.

Its subcellular location is the cytoplasm. Functionally, the RecF protein is involved in DNA metabolism; it is required for DNA replication and normal SOS inducibility. RecF binds preferentially to single-stranded, linear DNA. It also seems to bind ATP. The sequence is that of DNA replication and repair protein RecF from Xanthomonas euvesicatoria pv. vesicatoria (strain 85-10) (Xanthomonas campestris pv. vesicatoria).